The chain runs to 313 residues: MRQDHLITATQLSRDDIEAVLDRAREVADDPAAYADRHAGSVLALCFFEPSTRTRMSFDSAAKRLGMNTIGMGDVDSSSVSKGESLSDTVRVIEGYADALVLRHPSEGAATLAAERVSVPVVNAGDGAGQHPSQTLLDLHTIRENHGLDDLTVGIMGDLKYGRTVHSLAAALTEFDANQHFISPESLRLPRSVRFDLHETGAQVREHTDLEGVLGELDVLYVTRIQKERFPDENEYHRVAGEYQIDAETLEDAPDDLTVMHPLPRVDEIAPDVDETDHATYFEQAHNGIPVRMALLDILLENAEGDEGMEVDR.

Arginine 53 and threonine 54 together coordinate carbamoyl phosphate. Lysine 82 serves as a coordination point for L-aspartate. Positions 103, 131, and 134 each coordinate carbamoyl phosphate. 2 residues coordinate L-aspartate: arginine 163 and arginine 224. The carbamoyl phosphate site is built by leucine 263 and proline 264.

Belongs to the aspartate/ornithine carbamoyltransferase superfamily. ATCase family. As to quaternary structure, heterooligomer of catalytic and regulatory chains.

It catalyses the reaction carbamoyl phosphate + L-aspartate = N-carbamoyl-L-aspartate + phosphate + H(+). It participates in pyrimidine metabolism; UMP biosynthesis via de novo pathway; (S)-dihydroorotate from bicarbonate: step 2/3. Functionally, catalyzes the condensation of carbamoyl phosphate and aspartate to form carbamoyl aspartate and inorganic phosphate, the committed step in the de novo pyrimidine nucleotide biosynthesis pathway. The polypeptide is Aspartate carbamoyltransferase catalytic subunit (Halorubrum lacusprofundi (strain ATCC 49239 / DSM 5036 / JCM 8891 / ACAM 34)).